A 244-amino-acid polypeptide reads, in one-letter code: Carboxy-S-adenosyl-L-methionine synthase (244 aa).

S-adenosyl-L-methionine contacts are provided by residues tyrosine 41, 66–68 (GCS), 91–92 (DN), asparagine 134, and arginine 201.

This sequence belongs to the class I-like SAM-binding methyltransferase superfamily. Cx-SAM synthase family. As to quaternary structure, homodimer.

The catalysed reaction is prephenate + S-adenosyl-L-methionine = carboxy-S-adenosyl-L-methionine + 3-phenylpyruvate + H2O. In terms of biological role, catalyzes the conversion of S-adenosyl-L-methionine (SAM) to carboxy-S-adenosyl-L-methionine (Cx-SAM). The protein is Carboxy-S-adenosyl-L-methionine synthase of Colwellia psychrerythraea (strain 34H / ATCC BAA-681) (Vibrio psychroerythus).